Reading from the N-terminus, the 214-residue chain is Riboflavin kinase (214 aa).

Residues 1 to 91 (MRSIMEVETL…YCSIFEDGGA (91 aa)) form an H-T-H motif-like region. A riboflavin kinase region spans residues 92–214 (PVMRGKVVTG…DGDEVEVTLE (123 aa)). CDP is bound at residue 101-106 (GLGEGQ). The Mg(2+) site is built by Thr130 and Asn132. The FMN site is built by Thr182 and Glu190. 195–198 (IKLR) is a binding site for CDP.

The protein belongs to the archaeal riboflavin kinase family. It depends on Mg(2+) as a cofactor.

The catalysed reaction is riboflavin + CTP = CDP + FMN + H(+). Its pathway is cofactor biosynthesis; FMN biosynthesis; FMN from riboflavin (CTP route): step 1/1. Catalyzes the CTP-dependent phosphorylation of riboflavin (vitamin B2) to form flavin mononucleotide (FMN). This Methanocella arvoryzae (strain DSM 22066 / NBRC 105507 / MRE50) protein is Riboflavin kinase (ribK).